The sequence spans 122 residues: Large ribosomal subunit protein uL14 (122 aa).

It belongs to the universal ribosomal protein uL14 family. In terms of assembly, part of the 50S ribosomal subunit. Forms a cluster with proteins L3 and L19. In the 70S ribosome, L14 and L19 interact and together make contacts with the 16S rRNA in bridges B5 and B8.

In terms of biological role, binds to 23S rRNA. Forms part of two intersubunit bridges in the 70S ribosome. The chain is Large ribosomal subunit protein uL14 from Alkalilimnicola ehrlichii (strain ATCC BAA-1101 / DSM 17681 / MLHE-1).